A 164-amino-acid polypeptide reads, in one-letter code: Protein eva-1 homolog B (164 aa).

Residues 29–49 (GLYFVLGVCFGLLLTLCLLVI) form a helical membrane-spanning segment. Residues 56–110 (RSRPRTPAPRRDPRSSTLEPEDEDDEEDEDTMTRLGPDDTLQGQELSTEPDGPLS) form a disordered region. Positions 74 to 85 (EPEDEDDEEDED) are enriched in acidic residues. 3 positions are modified to phosphothreonine: threonine 86, threonine 149, and threonine 157.

The protein belongs to the EVA1 family.

The protein localises to the membrane. The polypeptide is Protein eva-1 homolog B (Eva1b) (Mus musculus (Mouse)).